Consider the following 283-residue polypeptide: uncharacterized protein (283 aa).

A signal peptide spans 1-21 (MKLKLKFLLISLLGSSLLLSA). Cysteine 22 carries N-palmitoyl cysteine lipidation. Cysteine 22 is lipidated: S-diacylglycerol cysteine.

This sequence belongs to the MG439/MG440 family.

It localises to the cell membrane. This is an uncharacterized protein from Mycoplasma pneumoniae (strain ATCC 29342 / M129 / Subtype 1) (Mycoplasmoides pneumoniae).